Reading from the N-terminus, the 443-residue chain is Serine/threonine-protein kinase Nek2 (443 aa).

Residues 8-271 (YEVLHSIGTG…VEEILESPLI (264 aa)) enclose the Protein kinase domain. ATP contacts are provided by residues 14 to 22 (IGTGSYGRC) and K37. The active-site Proton acceptor is D141. T170 is modified (phosphothreonine; by autocatalysis). The residue at position 171 (S171) is a Phosphoserine; by autocatalysis. Phosphothreonine; by autocatalysis occurs at positions 175 and 179. At S184 the chain carries Phosphoserine. Position 241 is a phosphoserine; by autocatalysis (S241). The interval 264–443 (EILESPLIAD…LKSRQILGMR (180 aa)) is interaction with PCNT. Basic and acidic residues predominate over residues 282–292 (NLERRGRRSGE). Residues 282-303 (NLERRGRRSGEPSKLPDSSPVL) form a disordered region. S300 carries the post-translational modification Phosphoserine. The interval 301–443 (PVLSELKLKE…LKSRQILGMR (143 aa)) is interaction with CEP85. Residues 303-361 (LSELKLKERQLQDREQALRAREDILEQKERELCIRERLAEDKLARAESLMKNYSLLKEH) adopt a coiled-coil conformation. Positions 306 to 334 (LKLKERQLQDREQALRAREDILEQKEREL) are leucine-zipper. Residues 329–443 (QKERELCIRE…LKSRQILGMR (115 aa)) are necessary for interaction with MAD1L1. The interval 333-370 (ELCIRERLAEDKLARAESLMKNYSLLKEHRLLCLAGGP) is required for microtubule binding and for localization to the centrosomes. S356 is subject to Phosphoserine; by STK3/MST2. Residues 383–402 (VHFHGESKENTARSENSESY) form a disordered region. Basic and acidic residues predominate over residues 385-398 (FHGESKENTARSEN). 3 positions are modified to phosphoserine: S389, S396, and S401. Residues 402-437 (YLAKSKCRDLKKRLHAAQLRAQALADIEKNYQLKSR) form an interaction with SAV1 and STK3/MST2 region. A coiled-coil region spans residues 403-427 (LAKSKCRDLKKRLHAAQLRAQALAD). Residue S436 is modified to Phosphoserine; by STK3/MST2.

It belongs to the protein kinase superfamily. NEK Ser/Thr protein kinase family. NIMA subfamily. As to quaternary structure, forms homodimers and heterodimers. Interacts with CDC20, CTNB1, MAD1L1, MAD2L1, MAPK, NEK11, NPM1, NDC80, PCNT, PPP1CA, PPP1CC and SGO1. Interacts with STK3/MST2 (via SARAH domain) and SAV1 (via SARAH domain). Interacts with NECAB3 and HMGA2. Interacts with CEP68; the interaction leads to phosphorylation of CEP68. Interacts with CNTLN; the interaction leads to phosphorylation of CNTLN. Interacts with CEP85. The cofactor is Mg(2+). Activated by autophosphorylation. Protein phosphatase 1 represses autophosphorylation and activation of isoform 1 by dephosphorylation. Phosphorylation by STK3/MST2 is necessary for its localization to the centrosome. Most abundantly expressed in testis. Low levels found in mid-gestation embryo, ovary, placenta, intestine, thymus and skin. Within the testis, expression restricted to germ cells with highest levels detected in spermatocytes at pachytene and diplotene stages. Also expressed in meiotic pachytene oocytes.

It is found in the nucleus. Its subcellular location is the nucleolus. It localises to the cytoplasm. The protein localises to the cytoskeleton. The protein resides in the microtubule organizing center. It is found in the centrosome. Its subcellular location is the spindle pole. It localises to the chromosome. The protein localises to the centromere. The protein resides in the kinetochore. It catalyses the reaction L-seryl-[protein] + ATP = O-phospho-L-seryl-[protein] + ADP + H(+). It carries out the reaction L-threonyl-[protein] + ATP = O-phospho-L-threonyl-[protein] + ADP + H(+). Its catalytic activity is inhibited by the inhibitor CCT241950. In the presence of this inhibitor, displays an autoinhibited conformation: Tyr-70 side chain points into the active site, interacts with the activation loop, and blocks the alphaC helix. Its function is as follows. Protein kinase which is involved in the control of centrosome separation and bipolar spindle formation in mitotic cells and chromatin condensation in meiotic cells. Regulates centrosome separation (essential for the formation of bipolar spindles and high-fidelity chromosome separation) by phosphorylating centrosomal proteins such as CROCC, CEP250 and NINL, resulting in their displacement from the centrosomes. Regulates kinetochore microtubule attachment stability in mitosis via phosphorylation of NDC80. Involved in regulation of mitotic checkpoint protein complex via phosphorylation of CDC20 and MAD2L1. Plays an active role in chromatin condensation during the first meiotic division through phosphorylation of HMGA2. Phosphorylates: PPP1CC; SGO1; NECAB3 and NPM1. Essential for localization of MAD2L1 to kinetochore and MAPK1 and NPM1 to the centrosome. Phosphorylates CEP68 and CNTLN directly or indirectly. NEK2-mediated phosphorylation of CEP68 promotes CEP68 dissociation from the centrosome and its degradation at the onset of mitosis. Phosphorylates and activates NEK11 in G1/S-arrested cells. Involved in the regulation of centrosome disjunction. In Mus musculus (Mouse), this protein is Serine/threonine-protein kinase Nek2 (Nek2).